Reading from the N-terminus, the 953-residue chain is Nonsense-mediated mRNA decay factor SMG8 (953 aa).

Disordered stretches follow at residues 571-604 (AQDAELDPDEEDEELPTGEREEQHITQSNGCSQP) and 629-653 (PCFDQSSSSEAESTCSGTSSEESNN). Residues 574-586 (AELDPDEEDEELP) are compositionally biased toward acidic residues. Residues 595–604 (ITQSNGCSQP) show a composition bias toward polar residues. Over residues 634–653 (SSSSEAESTCSGTSSEESNN) the composition is skewed to low complexity.

It belongs to the SMG8 family.

Its function is as follows. Involved in nonsense-mediated decay (NMD) of mRNAs containing premature stop codons. Probable component of kinase complex containing nonC and recruited to stalled ribosomes. The polypeptide is Nonsense-mediated mRNA decay factor SMG8 (Drosophila persimilis (Fruit fly)).